The primary structure comprises 458 residues: Repulsive guidance molecule A (458 aa).

A signal peptide spans methionine 1 to threonine 53. A propeptide spans serine 54–aspartate 176 (removed in mature form). The span at histidine 121–arginine 133 shows a compositional bias: polar residues. Residues histidine 121–serine 149 are disordered. Asparagine 122 and asparagine 167 each carry an N-linked (GlcNAc...) asparagine glycan. 2 disulfide bridges follow: cysteine 153–cysteine 234 and cysteine 171–cysteine 323. An N-linked (GlcNAc...) asparagine glycan is attached at asparagine 397. Alanine 433 is lipidated: GPI-anchor amidated alanine. The propeptide at alanine 434–cysteine 458 is removed in mature form.

The protein belongs to the repulsive guidance molecule (RGM) family. As to quaternary structure, interacts with NEO1, BMP2 and BMP4. In terms of processing, autocatalytically cleaved at low pH; the two chains remain linked via two disulfide bonds.

It localises to the cell membrane. Functionally, member of the repulsive guidance molecule (RGM) family that performs several functions in the developing and adult nervous system. Regulates cephalic neural tube closure, inhibits neurite outgrowth and cortical neuron branching, and the formation of mature synapses. Binding to its receptor NEO1/neogenin induces activation of RHOA-ROCK1/Rho-kinase signaling pathway through UNC5B-ARHGEF12/LARG-PTK2/FAK1 cascade, leading to collapse of the neuronal growth cone and neurite outgrowth inhibition. Furthermore, RGMA binding to NEO1/neogenin leads to HRAS inactivation by influencing HRAS-PTK2/FAK1-AKT1 pathway. It also functions as a bone morphogenetic protein (BMP) coreceptor that may signal through SMAD1, SMAD5, and SMAD8. The polypeptide is Repulsive guidance molecule A (RGMA) (Macaca fascicularis (Crab-eating macaque)).